A 306-amino-acid chain; its full sequence is MNLSTRVMLNRLTQQCVYKRIVTFSTKTAEHVIENQEEQKKEAPPTTPTSPVNRKTIIPANYRFVYPEFLPDPKVEWRNLVREKLERLDMLDRRKQIDLPEFYVGSVLAVTSSDPHAAGKTSRFVGICINRDRCGLRARFILRNVIDHQGMEVVYELYDPTILKIEVLRLEKRLDDSLFYLRDALPEYSTFDENMEAEPLEEGAPVPVNDIKVVLRPRPWLERWERQNLRGVANIDEYLKDKHRLSAAKVQKPWEKYDMMKDYRSSIPEEEQTEIFAEVHTELHALELQRKRNKRKRTFIKPKQLA.

Over residues 34 to 43 (ENQEEQKKEA) the composition is skewed to basic and acidic residues. Residues 34-53 (ENQEEQKKEAPPTTPTSPVN) are disordered.

It belongs to the bacterial ribosomal protein bL19 family. As to quaternary structure, component of the mitochondrial ribosome large subunit (39S) which comprises a 16S rRNA and about 50 distinct proteins.

It localises to the mitochondrion. This Drosophila melanogaster (Fruit fly) protein is Large ribosomal subunit protein bL19m (mRpL19).